A 179-amino-acid chain; its full sequence is MAKLHDKYKETVIAELSKKFGYTSVMQVPRIEKITLNMGVGEAVADKKVMEHALRDMTAIAGQKPVVTVARKSVAGFKIRDGYPIGCKVTLRGERMWEFLERLVDIAIPRIRDFRGLSAKSFDGRGNYAMGVREQIIFPEIDYDKIDKIRGMDIVITTTAKNDEEGRALLDAFNFPFKK.

The protein belongs to the universal ribosomal protein uL5 family. Part of the 50S ribosomal subunit; part of the 5S rRNA/L5/L18/L25 subcomplex. Contacts the 5S rRNA and the P site tRNA. Forms a bridge to the 30S subunit in the 70S ribosome.

In terms of biological role, this is one of the proteins that bind and probably mediate the attachment of the 5S RNA into the large ribosomal subunit, where it forms part of the central protuberance. In the 70S ribosome it contacts protein S13 of the 30S subunit (bridge B1b), connecting the 2 subunits; this bridge is implicated in subunit movement. Contacts the P site tRNA; the 5S rRNA and some of its associated proteins might help stabilize positioning of ribosome-bound tRNAs. This chain is Large ribosomal subunit protein uL5, found in Shewanella loihica (strain ATCC BAA-1088 / PV-4).